Reading from the N-terminus, the 142-residue chain is Large ribosomal subunit protein uL16 (142 aa).

Belongs to the universal ribosomal protein uL16 family. In terms of assembly, part of the 50S ribosomal subunit.

Its function is as follows. Binds 23S rRNA and is also seen to make contacts with the A and possibly P site tRNAs. In Thermosipho melanesiensis (strain DSM 12029 / CIP 104789 / BI429), this protein is Large ribosomal subunit protein uL16.